A 255-amino-acid polypeptide reads, in one-letter code: uncharacterized protein (255 aa).

[4Fe-4S] cluster contacts are provided by C122 and C160.

As to quaternary structure, homodimer. Requires [4Fe-4S] cluster as cofactor.

This is an uncharacterized protein from Escherichia coli (strain K12).